A 591-amino-acid polypeptide reads, in one-letter code: Probable lysosomal cobalamin transporter (591 aa).

5 helical membrane-spanning segments follow: residues 8–28 (LIWVAYAVAVAILFLIASTFV), 39–59 (AAVTIVCIFTTLALLATVLLI), 95–115 (IVYYTLYSLDAVLCLLVIPFT), 144–164 (WTLGFLIFVVAIFLVGFFVPF), and 198–218 (FLITVGTVLFVLYTGAGMALL). The disordered stretch occupies residues 238 to 266 (TASQLETNRERQRQLEGRNEGREGGLDSR). Basic and acidic residues predominate over residues 244–266 (TNRERQRQLEGRNEGREGGLDSR). The next 4 membrane-spanning stretches (helical) occupy residues 315–335 (LIGGLILLVFALVIFASMLIT), 378–398 (VLFLLLVLFLFSASVVGIATA), 422–442 (MATVLLTLITLAINYSVAMVV), and 509–529 (FFGIVLFWAQFAFLGVYLIVF).

This sequence belongs to the LIMR family. LMBRD1 subfamily.

It localises to the lysosome membrane. Functionally, probable lysosomal cobalamin transporter. Required to export cobalamin from lysosomes allowing its conversion to cofactors. The sequence is that of Probable lysosomal cobalamin transporter from Pyrenophora tritici-repentis (strain Pt-1C-BFP) (Wheat tan spot fungus).